Here is a 1014-residue protein sequence, read N- to C-terminus: Beta-galactosidase (1014 aa).

Catalysis depends on Glu460, which acts as the Proton donor. Glu527 serves as the catalytic Nucleophile.

Belongs to the glycosyl hydrolase 2 family.

The enzyme catalyses Hydrolysis of terminal non-reducing beta-D-galactose residues in beta-D-galactosides.. This is Beta-galactosidase (lacZ) from Halalkalibacterium halodurans (strain ATCC BAA-125 / DSM 18197 / FERM 7344 / JCM 9153 / C-125) (Bacillus halodurans).